The sequence spans 199 residues: Chaperone protein TorD (199 aa).

This sequence belongs to the TorD/DmsD family. TorD subfamily.

The protein resides in the cytoplasm. Involved in the biogenesis of TorA. Acts on TorA before the insertion of the molybdenum cofactor and, as a result, probably favors a conformation of the apoenzyme that is competent for acquiring the cofactor. In Escherichia coli O8 (strain IAI1), this protein is Chaperone protein TorD.